Reading from the N-terminus, the 349-residue chain is Short-wave-sensitive opsin 1 (349 aa).

Over 1–34 the chain is Extracellular; sequence MSKMSEEEEFLLFKNISLVGPWDGPQYHLAPVWA. Asn-15 carries an N-linked (GlcNAc...) asparagine glycan. A helical membrane pass occupies residues 35–59; sequence FHLQAVFMGFVFFVGTPLNATVLVA. Over 60 to 71 the chain is Cytoplasmic; it reads TLRYRKLRQPLN. Residues 72-97 traverse the membrane as a helical segment; sequence YILVNVSLGGFIYCIFSVFIVFITSC. Residues 98–111 are Extracellular-facing; it reads YGYFVFGRHVCALE. Cys-108 and Cys-185 are joined by a disulfide. Residues 112 to 131 form a helical membrane-spanning segment; it reads AFLGCTAGLVTGWSLAFLAF. The Cytoplasmic segment spans residues 132–150; that stretch reads ERYIIICKPFGNFRFSSKH. Residues 151-174 traverse the membrane as a helical segment; sequence ALMVVVATWTIGIGVSIPPFFGWS. Residues 175–200 lie on the Extracellular side of the membrane; that stretch reads RFVPEGLQCSCGPDWYTVGTKYYSEY. The helical transmembrane segment at 201–228 threads the bilayer; that stretch reads YTWFLFIFCYIVPLSLICFSYSQLLGAL. At 229–250 the chain is on the cytoplasmic side; that stretch reads RAVAAQQQESASTQKAEREVSH. Residues 251 to 274 form a helical membrane-spanning segment; it reads MVVVMVGSFCLCYTPYAALAMYIV. Residues 275 to 282 are Extracellular-facing; sequence NNRNHGVD. Residues 283–307 traverse the membrane as a helical segment; the sequence is LRLVTIPAFFSKSACVYNPIIYCFM. Lys-294 bears the N6-(retinylidene)lysine mark. Topologically, residues 308 to 349 are cytoplasmic; the sequence is NKQFRACIMEMVCGKPMTDESELSSSQKTEVSTVSSSQVGPN. The interval 327 to 349 is disordered; sequence ESELSSSQKTEVSTVSSSQVGPN. Polar residues predominate over residues 330 to 349; it reads LSSSQKTEVSTVSSSQVGPN.

This sequence belongs to the G-protein coupled receptor 1 family. Opsin subfamily. In terms of processing, phosphorylated on some or all of the serine and threonine residues present in the C-terminal region.

It localises to the cell membrane. It is found in the photoreceptor inner segment. The protein resides in the cell projection. Its subcellular location is the cilium. The protein localises to the photoreceptor outer segment. It localises to the cytoplasm. It is found in the perinuclear region. Its function is as follows. Visual pigments are the light-absorbing molecules that mediate vision. They consist of an apoprotein, opsin, covalently linked to cis-retinal. Required for the maintenance of cone outer segment organization in the ventral retina, but not essential for the maintenance of functioning cone photoreceptors. Involved in ensuring correct abundance and localization of retinal membrane proteins. May increase spectral sensitivity in dim light. The polypeptide is Short-wave-sensitive opsin 1 (OPN1SW) (Bos taurus (Bovine)).